We begin with the raw amino-acid sequence, 289 residues long: MDPFILAAIISGIVIIILSIAFLRVSQVKPQAAARPRAVVQRDGGPGRVQAVRNQRARMRANAARHQAALEEEPEIQEEADEGAPDIDQKIDFDDKMGAKKRAKMEAKLEKKKAHEAEEHLREIKKKKEEEQEQERKKIEEKQEEEERKREEAEKKAEDERKKREQEEYEAMKAAFSIEGEGFDENEEEDRESLLRDFIGYIKTQKVVLLEDLAAHFKLKTQAAIDRITELQASGELTGVIDDRGKFIYISQSELESIAKFIKQRGRVSIAELAECSNDLINLAPVTVP.

At 1–2 (MD) the chain is on the lumenal side. Residues 3–23 (PFILAAIISGIVIIILSIAFL) traverse the membrane as a helical segment. Residues 24–289 (RVSQVKPQAA…LINLAPVTVP (266 aa)) lie on the Cytoplasmic side of the membrane. Residues 65–168 (RHQAALEEEP…DERKKREQEE (104 aa)) form a disordered region. A compositionally biased stretch (acidic residues) spans 70 to 85 (LEEEPEIQEEADEGAP). Over residues 87 to 166 (IDQKIDFDDK…AEDERKKREQ (80 aa)) the composition is skewed to basic and acidic residues.

It belongs to the DDRGK1 family. In terms of assembly, interacts with Atg9; the interaction is transient.

It localises to the endoplasmic reticulum membrane. In terms of biological role, substrate adapter for ufmylation, the covalent attachment of the ubiquitin-like modifier UFM1 to substrate proteins. Required for ufmylation of Atg9; protects the nervous system during aging, possibly by stabilizing Atg9 and supporting its function. The sequence is that of DDRGK domain-containing protein 1 from Bombyx mori (Silk moth).